We begin with the raw amino-acid sequence, 253 residues long: Putative cysteine-rich repeat secretory protein 33 (253 aa).

The N-terminal stretch at Met-1–Ser-28 is a signal peptide. Gnk2-homologous domains follow at residues Glu-34–Asp-133 and Tyr-141–Phe-250.

Belongs to the cysteine-rich repeat secretory protein family.

Its subcellular location is the secreted. The chain is Putative cysteine-rich repeat secretory protein 33 (CRRSP33) from Arabidopsis thaliana (Mouse-ear cress).